The primary structure comprises 455 residues: Ammonium transporter Rh type B (455 aa).

At 1 to 10 (MARIPRHRRL) the chain is on the cytoplasmic side. The chain crosses the membrane as a helical span at residues 11 to 31 (VLPLLCLLFQGATSLLFAIFV). Residues 32 to 58 (RYNHETDAALWHWGNHSNVDNEFYFRY) lie on the Extracellular side of the membrane. Asn46 is a glycosylation site (N-linked (GlcNAc...) asparagine). The chain crosses the membrane as a helical span at residues 59–79 (PSFQDVHVMVFVGFGFLMVFL). The Cytoplasmic segment spans residues 80–83 (QRYG). Residues 84–104 (FSSVGFTFLVATFTLQWATLL) traverse the membrane as a helical segment. The Extracellular portion of the chain corresponds to 105–121 (QGFLHSFHGGHIHIGVE). The chain crosses the membrane as a helical span at residues 122 to 142 (SLINADFCAGAVLISFGAVLG). Over 143 to 148 (KTGPAQ) the chain is Cytoplasmic. A helical membrane pass occupies residues 149-169 (LLLMALLEAVLFSVNEFILLS). Residues 170–176 (LLGVRDA) are Extracellular-facing. Residues 177-197 (GGSMTIHTFGAYFGLFLSRVL) form a helical membrane-spanning segment. The Cytoplasmic segment spans residues 198-216 (YRSQLEKSRHRQTSVYNSD). The helical transmembrane segment at 217-237 (LFAMIGTIFLWVFWPSFNSAP) threads the bilayer. Residues 238-247 (TALGDGQHRT) lie on the Extracellular side of the membrane. The helical transmembrane segment at 248 to 270 (VVNTYYSLTASTLSTFALSALVS) threads the bilayer. The Cytoplasmic portion of the chain corresponds to 271 to 274 (GDGR). The helical transmembrane segment at 275 to 295 (LDMVHIQNAALAGGVVVGTAS) threads the bilayer. A topological domain (extracellular) is located at residue Glu296. The helical transmembrane segment at 297–317 (MMLTPFGALAAGFLAGTVSTL) threads the bilayer. Residues 318 to 340 (GYKFFTPILESRFKLQDTCGVHN) lie on the Cytoplasmic side of the membrane. A helical membrane pass occupies residues 341–361 (LHGMPGLLGAILGVLVAALAT). The Extracellular segment spans residues 362–390 (HEAYGDGLQTVFPLIAKGQRSATSQAMYQ). The chain crosses the membrane as a helical span at residues 391 to 411 (LFGMFVTLVFASVGGSLGGLL). The Cytoplasmic portion of the chain corresponds to 412–455 (LKLPFLDSPPDSQCFEDQVYWEVPGEQEAETQRPLRTEEPDTQA). An interaction with ANK3 region spans residues 413 to 421 (KLPFLDSPP).

It belongs to the ammonium transporter (TC 2.A.49) family. Rh subfamily. As to quaternary structure, interacts (via C-terminus) with ANK2 and ANK3; required for targeting to the basolateral membrane. In terms of processing, N-glycosylated. In terms of tissue distribution, expressed in kidney by connecting segments and collecting tubules (at protein level).

The protein resides in the basolateral cell membrane. It is found in the cytoplasmic vesicle membrane. The catalysed reaction is NH4(+)(in) = NH4(+)(out). It catalyses the reaction methylamine(out) = methylamine(in). The enzyme catalyses CO2(out) = CO2(in). Its function is as follows. Ammonium transporter involved in the maintenance of acid-base homeostasis. Transports ammonium and its related derivative methylammonium across the basolateral plasma membrane of epithelial cells likely contributing to renal transepithelial ammonia transport and ammonia metabolism. May transport either NH4(+) or NH3 ammonia species predominantly mediating an electrogenic NH4(+) transport. May act as a CO2 channel providing for renal acid secretion. The polypeptide is Ammonium transporter Rh type B (Rhbg) (Rattus norvegicus (Rat)).